The chain runs to 376 residues: Chaperone protein DnaJ (376 aa).

A J domain is found at 5–72; that stretch reads DFYEVLGVPK…QKRAAYDQYG (68 aa). The segment at 136 to 214 adopts a CR-type zinc-finger fold; that stretch reads GKEAQIRIPS…CHGQGRVKKQ (79 aa). The Zn(2+) site is built by Cys149, Cys152, Cys166, Cys169, Cys188, Cys191, Cys202, and Cys205. 4 CXXCXGXG motif repeats span residues 149 to 156, 166 to 173, 188 to 195, and 202 to 209; these read CETCHGSG, CGTCQGSG, CPHCRGTG, and CTACHGQG. Disordered stretches follow at residues 227 to 246 and 354 to 376; these read DGMR…GGPP and KKGG…SFFS. Residues 237-246 show a composition bias toward gly residues; sequence GEPGTNGGPP. Basic and acidic residues predominate over residues 367–376; the sequence is WTDRLKSFFS.

This sequence belongs to the DnaJ family. In terms of assembly, homodimer. Requires Zn(2+) as cofactor.

The protein resides in the cytoplasm. Participates actively in the response to hyperosmotic and heat shock by preventing the aggregation of stress-denatured proteins and by disaggregating proteins, also in an autonomous, DnaK-independent fashion. Unfolded proteins bind initially to DnaJ; upon interaction with the DnaJ-bound protein, DnaK hydrolyzes its bound ATP, resulting in the formation of a stable complex. GrpE releases ADP from DnaK; ATP binding to DnaK triggers the release of the substrate protein, thus completing the reaction cycle. Several rounds of ATP-dependent interactions between DnaJ, DnaK and GrpE are required for fully efficient folding. Also involved, together with DnaK and GrpE, in the DNA replication of plasmids through activation of initiation proteins. This Acidovorax ebreus (strain TPSY) (Diaphorobacter sp. (strain TPSY)) protein is Chaperone protein DnaJ.